The sequence spans 240 residues: Thyroid transcription factor 1-associated protein 26 (240 aa).

Residues 104–181 are disordered; sequence LRKQQRKAGL…QEEYERVQAK (78 aa). A compositionally biased stretch (low complexity) spans 131-149; the sequence is TEQTSSEEPPGGHQPQPEE. The segment covering 171 to 181 has biased composition (basic and acidic residues); sequence AQEEYERVQAK.

This sequence belongs to the TAP26 family. As to quaternary structure, interacts with NKX2-1.

Its subcellular location is the nucleus. Functionally, component of the transcription complexes of the pulmonary surfactant-associated protein-B (SFTPB) and -C (SFTPC). Enhances homeobox protein Nkx-2.1-activated SFTPB and SFTPC promoter activities. This is Thyroid transcription factor 1-associated protein 26 (Ccdc59) from Mus musculus (Mouse).